A 306-amino-acid polypeptide reads, in one-letter code: IN2-2 protein (306 aa).

Tyr-64 acts as the Proton donor in catalysis. His-131 lines the substrate pocket. 210-220 (SPLGRGFFSSG) contributes to the NADP(+) binding site. Residues 272-306 (LGSPPRKRRLPHTWHNKNRQLQPERGGTVCEAYTG) form a disordered region. Residues 276-289 (PRKRRLPHTWHNKN) are compositionally biased toward basic residues.

Belongs to the aldo/keto reductase family. Aldo/keto reductase 2 subfamily. In terms of tissue distribution, leaves and roots.

This chain is IN2-2 protein (IN2-2), found in Zea mays (Maize).